The primary structure comprises 358 residues: MAPQNLSTFCLLLLYLIGTVIAGRDFYKILGVPRSASIKDIKKAYRKLALQLHPDRNPDDPQAQEKFQDLGAAYEVLSDSEKRKQYDTYGEEGLKDGHQSSHGDIFSHFFGDFGFMFGGTPRQQDRNIPRGSDIIVDLEVTLEEVYAGNFVEVVRNKPVARQAPGKRKCNCRQEMRTTQLGPGRFQMTQEVVCDECPNVKLVNEERTLEVEIEPGVRDGMEYPFIGEGEPHVDGEPGDLRFRIKVVKHRIFERRGDDLYTNVTVSLVEALVGFEMDITHLDGHKVHISRDKITRPGAKLWKKGEGLPNFDNNNIKGSLIITFDVDFPKEQLTEEAKEGIKQLLKQGPVQKVYNGLQGY.

The N-terminal stretch at Met1–Ala22 is a signal peptide. Residues Asp25–Gly90 form the J domain. Phosphothreonine is present on Thr188. Asn261 is a glycosylation site (N-linked (GlcNAc...) asparagine).

Part of a large chaperone multiprotein complex comprising DNAJB11, HSP90B1, HSPA5, HYOU, PDIA2, PDIA4, PDIA6, PPIB, SDF2L1, UGGT1 and very small amounts of ERP29, but not, or at very low levels, CALR nor CANX. Binds to denatured substrates in an ATP-independent manner. Interacts via the J domain with HSPA5 in an ATP-dependent manner. Post-translationally, contains high-mannose Endo H-sensitive carbohydrates. Cys-169, Cys-171, Cys-193 and Cys-196 form intramolecular disulfide bonds. The preferential partner for each Cys is not known.

It is found in the endoplasmic reticulum lumen. Its function is as follows. As a co-chaperone for HSPA5 it is required for proper folding, trafficking or degradation of proteins. Binds directly to both unfolded proteins that are substrates for ERAD and nascent unfolded peptide chains, but dissociates from the HSPA5-unfolded protein complex before folding is completed. May help recruiting HSPA5 and other chaperones to the substrate. Stimulates HSPA5 ATPase activity. It is necessary for maturation and correct trafficking of PKD1. This is DnaJ homolog subfamily B member 11 (Dnajb11) from Mus musculus (Mouse).